The sequence spans 348 residues: Probable tRNA pseudouridine synthase B (348 aa).

Asp93 acts as the Nucleophile in catalysis. The PUA domain maps to 260 to 335 (LKKIYILDSA…IAVDIERVFM (76 aa)).

This sequence belongs to the pseudouridine synthase TruB family. Type 2 subfamily.

It catalyses the reaction uridine(55) in tRNA = pseudouridine(55) in tRNA. In terms of biological role, could be responsible for synthesis of pseudouridine from uracil-55 in the psi GC loop of transfer RNAs. In Nanoarchaeum equitans (strain Kin4-M), this protein is Probable tRNA pseudouridine synthase B.